Consider the following 159-residue polypeptide: Regulatory protein RecX (159 aa).

It belongs to the RecX family.

The protein resides in the cytoplasm. Modulates RecA activity. The polypeptide is Regulatory protein RecX (Acinetobacter baylyi (strain ATCC 33305 / BD413 / ADP1)).